We begin with the raw amino-acid sequence, 139 residues long: Small ribosomal subunit protein uS12 (139 aa).

Residues 1–21 (MPTINQLVRKGRKAVQEKSTA) form a disordered region. Position 102 is a 3-methylthioaspartic acid (D102).

Belongs to the universal ribosomal protein uS12 family. Part of the 30S ribosomal subunit. Contacts proteins S8 and S17. May interact with IF1 in the 30S initiation complex.

In terms of biological role, with S4 and S5 plays an important role in translational accuracy. Interacts with and stabilizes bases of the 16S rRNA that are involved in tRNA selection in the A site and with the mRNA backbone. Located at the interface of the 30S and 50S subunits, it traverses the body of the 30S subunit contacting proteins on the other side and probably holding the rRNA structure together. The combined cluster of proteins S8, S12 and S17 appears to hold together the shoulder and platform of the 30S subunit. The protein is Small ribosomal subunit protein uS12 of Alkaliphilus metalliredigens (strain QYMF).